The following is a 310-amino-acid chain: Cytosolic Fe-S cluster assembly factor NUBP1 homolog (310 aa).

Cys12, Cys26, Cys29, and Cys35 together coordinate [4Fe-4S] cluster. Residue 66–73 coordinates ATP; the sequence is GKGGVGKS. Cys240 and Cys243 together coordinate [4Fe-4S] cluster.

It belongs to the Mrp/NBP35 ATP-binding proteins family. NUBP1/NBP35 subfamily. In terms of assembly, heterotetramer of 2 NUBP1 and 2 NUBP2 chains. [4Fe-4S] cluster serves as cofactor.

It localises to the cytoplasm. Component of the cytosolic iron-sulfur (Fe/S) protein assembly (CIA) machinery. Required for maturation of extramitochondrial Fe-S proteins. The NUBP1-NUBP2 heterotetramer forms a Fe-S scaffold complex, mediating the de novo assembly of an Fe-S cluster and its transfer to target apoproteins. This Brugia malayi (Filarial nematode worm) protein is Cytosolic Fe-S cluster assembly factor NUBP1 homolog.